A 218-amino-acid polypeptide reads, in one-letter code: Small ribosomal subunit protein uS3c (218 aa).

Residues 47-118 (VQKEMRISSG…RLNVVITRVA (72 aa)) form the KH type-2 domain.

This sequence belongs to the universal ribosomal protein uS3 family. As to quaternary structure, part of the 30S ribosomal subunit.

It localises to the plastid. The protein resides in the chloroplast. This is Small ribosomal subunit protein uS3c (rps3) from Ceratophyllum demersum (Rigid hornwort).